A 124-amino-acid polypeptide reads, in one-letter code: Prefoldin subunit beta (124 aa).

It belongs to the prefoldin subunit beta family. In terms of assembly, heterohexamer of two alpha and four beta subunits.

The protein localises to the cytoplasm. Functionally, molecular chaperone capable of stabilizing a range of proteins. Seems to fulfill an ATP-independent, HSP70-like function in archaeal de novo protein folding. The chain is Prefoldin subunit beta from Pyrobaculum arsenaticum (strain DSM 13514 / JCM 11321 / PZ6).